Here is a 157-residue protein sequence, read N- to C-terminus: Chromophore lyase CpcS/CpeS 1 (157 aa).

This sequence belongs to the CpcS/CpeS biliprotein lyase family.

It localises to the plastid. It is found in the organellar chromatophore. Covalently attaches a chromophore to Cys residue(s) of phycobiliproteins. The chain is Chromophore lyase CpcS/CpeS 1 from Paulinella chromatophora.